The chain runs to 243 residues: Sugar fermentation stimulation protein homolog (243 aa).

This sequence belongs to the SfsA family.

The polypeptide is Sugar fermentation stimulation protein homolog (Acaryochloris marina (strain MBIC 11017)).